A 469-amino-acid polypeptide reads, in one-letter code: Glutamate--tRNA ligase (469 aa).

The 'HIGH' region motif lies at 9 to 19; sequence PSPTGYLHVGG. The Zn(2+) site is built by C98, C100, C125, and D127. A 'KMSKS' region motif is present at residues 237–241; the sequence is KLSKR. Position 240 (K240) interacts with ATP.

This sequence belongs to the class-I aminoacyl-tRNA synthetase family. Glutamate--tRNA ligase type 1 subfamily. In terms of assembly, monomer. Requires Zn(2+) as cofactor.

The protein localises to the cytoplasm. It catalyses the reaction tRNA(Glu) + L-glutamate + ATP = L-glutamyl-tRNA(Glu) + AMP + diphosphate. Catalyzes the attachment of glutamate to tRNA(Glu) in a two-step reaction: glutamate is first activated by ATP to form Glu-AMP and then transferred to the acceptor end of tRNA(Glu). This is Glutamate--tRNA ligase from Serratia proteamaculans (strain 568).